The chain runs to 621 residues: 1-deoxy-D-xylulose-5-phosphate synthase (621 aa).

Thiamine diphosphate contacts are provided by residues His80 and 121–123 (GHS). Asp152 contacts Mg(2+). Residues 153 to 154 (GA), Asn181, Tyr288, and Glu370 each bind thiamine diphosphate. Asn181 serves as a coordination point for Mg(2+).

It belongs to the transketolase family. DXPS subfamily. Homodimer. It depends on Mg(2+) as a cofactor. Requires thiamine diphosphate as cofactor.

It carries out the reaction D-glyceraldehyde 3-phosphate + pyruvate + H(+) = 1-deoxy-D-xylulose 5-phosphate + CO2. Its pathway is metabolic intermediate biosynthesis; 1-deoxy-D-xylulose 5-phosphate biosynthesis; 1-deoxy-D-xylulose 5-phosphate from D-glyceraldehyde 3-phosphate and pyruvate: step 1/1. Functionally, catalyzes the acyloin condensation reaction between C atoms 2 and 3 of pyruvate and glyceraldehyde 3-phosphate to yield 1-deoxy-D-xylulose-5-phosphate (DXP). This chain is 1-deoxy-D-xylulose-5-phosphate synthase, found in Shewanella woodyi (strain ATCC 51908 / MS32).